Consider the following 648-residue polypeptide: Phosphatidylinositol-3,5-bisphosphate 3-phosphatase MTMR14 (648 aa).

The span at 1–19 (MAGARAAAAASAGSTASSG) shows a compositional bias: low complexity. The disordered stretch occupies residues 1-27 (MAGARAAAAASAGSTASSGSPPPQEPG). At K193 the chain carries N6-acetyllysine. N225 and N240 each carry an N-linked (GlcNAc...) asparagine glycan. The active-site Phosphocysteine intermediate is C329. The a 1,2-diacyl-sn-glycero-3-phospho-(1D-myo-inositol-3,5-bisphosphate) site is built by G332, W333, D334, R335, and R381. A 1,2-diacyl-sn-glycero-3-phospho-(1D-myo-inositol-3-phosphate)-binding residues include G332, W333, D334, R335, and R381. The segment at 471-544 (PTQAAWRKSH…PRSVDHPLPG (74 aa)) is disordered. Basic and acidic residues predominate over residues 494-506 (PSEERLPSHHGLT). At S516 the chain carries Phosphoserine. A glycan (N-linked (GlcNAc...) asparagine) is linked at N517. Phosphoserine is present on residues S528, S578, and S622. Residue R636 is modified to Omega-N-methylarginine.

The protein belongs to the protein-tyrosine phosphatase family. Non-receptor class myotubularin subfamily.

It localises to the cytoplasm. The catalysed reaction is a 1,2-diacyl-sn-glycero-3-phospho-(1D-myo-inositol-3,5-bisphosphate) + H2O = a 1,2-diacyl-sn-glycero-3-phospho-(1D-myo-inositol-5-phosphate) + phosphate. It carries out the reaction a 1,2-diacyl-sn-glycero-3-phospho-(1D-myo-inositol-3-phosphate) + H2O = a 1,2-diacyl-sn-glycero-3-phospho-(1D-myo-inositol) + phosphate. Functionally, lipid phosphatase that specifically dephosphorylates the D-3 position of phosphatidylinositol 3-phosphate and phosphatidylinositol 3,5-bisphosphate, generating phosphatidylinositol and phosphatidylinositol 5-phosphate. The protein is Phosphatidylinositol-3,5-bisphosphate 3-phosphatase MTMR14 of Mus musculus (Mouse).